Reading from the N-terminus, the 253-residue chain is 3-deoxy-manno-octulosonate cytidylyltransferase (253 aa).

It belongs to the KdsB family.

Its subcellular location is the cytoplasm. The enzyme catalyses 3-deoxy-alpha-D-manno-oct-2-ulosonate + CTP = CMP-3-deoxy-beta-D-manno-octulosonate + diphosphate. It participates in nucleotide-sugar biosynthesis; CMP-3-deoxy-D-manno-octulosonate biosynthesis; CMP-3-deoxy-D-manno-octulosonate from 3-deoxy-D-manno-octulosonate and CTP: step 1/1. Its pathway is bacterial outer membrane biogenesis; lipopolysaccharide biosynthesis. In terms of biological role, activates KDO (a required 8-carbon sugar) for incorporation into bacterial lipopolysaccharide in Gram-negative bacteria. This Acinetobacter baumannii (strain ATCC 17978 / DSM 105126 / CIP 53.77 / LMG 1025 / NCDC KC755 / 5377) protein is 3-deoxy-manno-octulosonate cytidylyltransferase.